A 237-amino-acid chain; its full sequence is Probable transcriptional regulatory protein MCAP_0598 (237 aa).

This sequence belongs to the TACO1 family.

It localises to the cytoplasm. This Mycoplasma capricolum subsp. capricolum (strain California kid / ATCC 27343 / NCTC 10154) protein is Probable transcriptional regulatory protein MCAP_0598.